The sequence spans 454 residues: Tubulin beta-3 chain (454 aa).

GTP is bound by residues Gln-11, Glu-75, Ser-144, Gly-148, Thr-149, Gly-150, Asn-210, and Asn-232. Residue Glu-75 coordinates Mg(2+). Residues 435–454 (TADDEFDPEVNQEEVEGDCI) form a disordered region.

It belongs to the tubulin family. In terms of assembly, dimer of alpha and beta chains. A typical microtubule is a hollow water-filled tube with an outer diameter of 25 nm and an inner diameter of 15 nM. Alpha-beta heterodimers associate head-to-tail to form protofilaments running lengthwise along the microtubule wall with the beta-tubulin subunit facing the microtubule plus end conferring a structural polarity. Microtubules usually have 13 protofilaments but different protofilament numbers can be found in some organisms and specialized cells. Mg(2+) is required as a cofactor.

The protein resides in the cytoplasm. It localises to the cytoskeleton. Its function is as follows. Tubulin is the major constituent of microtubules, a cylinder consisting of laterally associated linear protofilaments composed of alpha- and beta-tubulin heterodimers. Microtubules grow by the addition of GTP-tubulin dimers to the microtubule end, where a stabilizing cap forms. Below the cap, tubulin dimers are in GDP-bound state, owing to GTPase activity of alpha-tubulin. This is Tubulin beta-3 chain (betaTub60D) from Drosophila melanogaster (Fruit fly).